The sequence spans 297 residues: MNIAIRNPVPVRREEGSLQVGLDPNDRIETAKVFAVYGKGGIGKSTTSSNLSVAFSKLGKRVLQIGCDPKHDSTFTLTKRLAPTVIDALEAVNFHSEELRAEDFVVEGYNGVKCVEAGGPPAGTGCGGYVVGQTVKLLKEHHLLEDTDVVVFDVLGDVVCGGFASPLQHADRALIVTANDFDSIFAMNRIVAAIHTKSKNYGVRLGGVIANRSAKTDEIDRFNAAVGLRRLAHFPDLDVVRRSRLKKSTLFEMEPTPELKAVTDEYMQLAETLWAGADPCEAVPMKDRDLFEFLGFD.

ATP-binding positions include 41–46 (GIGKST) and Lys70. A Mg(2+)-binding site is contributed by Ser45. [4Fe-4S] cluster contacts are provided by Cys126 and Cys160. ATP is bound by residues 211 to 212 (NR) and 235 to 237 (PDL).

Belongs to the NifH/BchL/ChlL family. As to quaternary structure, homodimer. Protochlorophyllide reductase is composed of three subunits; BchL, BchN and BchB. [4Fe-4S] cluster serves as cofactor.

It carries out the reaction chlorophyllide a + oxidized 2[4Fe-4S]-[ferredoxin] + 2 ADP + 2 phosphate = protochlorophyllide a + reduced 2[4Fe-4S]-[ferredoxin] + 2 ATP + 2 H2O. The protein operates within porphyrin-containing compound metabolism; bacteriochlorophyll biosynthesis (light-independent). In terms of biological role, component of the dark-operative protochlorophyllide reductase (DPOR) that uses Mg-ATP and reduced ferredoxin to reduce ring D of protochlorophyllide (Pchlide) to form chlorophyllide a (Chlide). This reaction is light-independent. The L component serves as a unique electron donor to the NB-component of the complex, and binds Mg-ATP. This is Light-independent protochlorophyllide reductase iron-sulfur ATP-binding protein from Methylorubrum extorquens (strain CM4 / NCIMB 13688) (Methylobacterium extorquens).